The chain runs to 525 residues: Glutamate--cysteine ligase (525 aa).

The protein belongs to the glutamate--cysteine ligase type 1 family. Type 1 subfamily.

The enzyme catalyses L-cysteine + L-glutamate + ATP = gamma-L-glutamyl-L-cysteine + ADP + phosphate + H(+). Its pathway is sulfur metabolism; glutathione biosynthesis; glutathione from L-cysteine and L-glutamate: step 1/2. This is Glutamate--cysteine ligase from Vibrio vulnificus (strain CMCP6).